The chain runs to 382 residues: Neuropeptide Y receptor type 2 (382 aa).

The disordered stretch occupies residues Met1–Pro39. Topologically, residues Met1 to Lys46 are extracellular. A glycan (N-linked (GlcNAc...) asparagine) is linked at Asn11. The chain crosses the membrane as a helical span at residues Leu47–Val67. Over Gly68 to Asn87 the chain is Cytoplasmic. The helical transmembrane segment at Phe88–Thr108 threads the bilayer. At Leu109–His125 the chain is on the extracellular side. A disulfide bridge connects residues Cys124 and Cys204. Residues Leu126–Ala146 form a helical membrane-spanning segment. Topologically, residues Leu147 to Ser166 are cytoplasmic. A helical transmembrane segment spans residues Phe167 to Phe187. At Arg188–Gly217 the chain is on the extracellular side. Residues Thr218 to Phe238 traverse the membrane as a helical segment. At Ser239–Lys269 the chain is on the cytoplasmic side. Residues Met270–Leu290 traverse the membrane as a helical segment. Residues Ala291–Lys305 lie on the Extracellular side of the membrane. The helical transmembrane segment at Leu306–Tyr326 threads the bilayer. Topologically, residues Gly327 to Val382 are cytoplasmic. Cys343 is lipidated: S-palmitoyl cysteine. The segment at Asn363–Val382 is disordered.

It belongs to the G-protein coupled receptor 1 family.

It is found in the cell membrane. Receptor for neuropeptide Y and peptide YY. The polypeptide is Neuropeptide Y receptor type 2 (NPY2R) (Sus scrofa (Pig)).